We begin with the raw amino-acid sequence, 109 residues long: Homeobox protein E30 (109 aa).

A compositionally biased stretch (basic residues) spans Gly1 to Asn12. The disordered stretch occupies residues Gly1–Phe27. The homeobox DNA-binding region spans Glu20–Ser79.

This sequence belongs to the engrailed homeobox family.

It is found in the nucleus. The sequence is that of Homeobox protein E30 from Apis mellifera (Honeybee).